The following is a 256-amino-acid chain: PHD finger protein ALFIN-LIKE 6 (256 aa).

Residues 144-200 (SKDLSVNNNNSKSKPSGVKSRQSESLSKVAKMSSPPPKEEEEEEDESEDESEDDEQG) are disordered. Residues 146 to 163 (DLSVNNNNSKSKPSGVKS) are compositionally biased toward low complexity. Acidic residues predominate over residues 182-199 (EEEEEEDESEDESEDDEQ). The PHD-type zinc finger occupies 200–252 (GAVCGACGDNYGTDEFWICCDACEKWFHGKCVKITPAKAEHIKHYKCPTCSNK).

It belongs to the Alfin family. As to quaternary structure, interacts with H3K4me3 and to a lesser extent with H3K4me2. Ubiquitously expressed.

The protein resides in the nucleus. Functionally, histone-binding component that specifically recognizes H3 tails trimethylated on 'Lys-4' (H3K4me3), which mark transcription start sites of virtually all active genes. This is PHD finger protein ALFIN-LIKE 6 (AL6) from Arabidopsis thaliana (Mouse-ear cress).